A 226-amino-acid polypeptide reads, in one-letter code: Uracil-DNA glycosylase (226 aa).

The active-site Proton acceptor is D64.

It belongs to the uracil-DNA glycosylase (UDG) superfamily. UNG family.

It localises to the cytoplasm. It carries out the reaction Hydrolyzes single-stranded DNA or mismatched double-stranded DNA and polynucleotides, releasing free uracil.. Its function is as follows. Excises uracil residues from the DNA which can arise as a result of misincorporation of dUMP residues by DNA polymerase or due to deamination of cytosine. In Vibrio campbellii (strain ATCC BAA-1116), this protein is Uracil-DNA glycosylase.